The primary structure comprises 307 residues: Secondary metabolism regulator LAE1 (307 aa).

It belongs to the methyltransferase superfamily. LaeA methyltransferase family. As to quaternary structure, component of the heterotrimeric velvet complex composed of LAE1, VEL1 and VEL2; VEL1 acting as a bridging protein between LAE1 and VEL2.

It localises to the nucleus. It catalyses the reaction L-methionyl-[protein] + S-adenosyl-L-methionine = S-methyl-L-methionyl-[protein] + S-adenosyl-L-homocysteine. In terms of biological role, methyltransferase that performs automethylation. No other methyl-accepting substrate has been identified yet. Component of the velvet transcription factor complex that acts as a global regulator for secondary metabolite gene expression. Controls the expression of the T-toxin gene cluster. Promotes oxidative stress tolerance and acts as a virulence factors during infection. Negatively regulate mycelial pigmentation and controls sexual development, as well as asexual development during vegetative growth. The protein is Secondary metabolism regulator LAE1 of Cochliobolus heterostrophus (strain C5 / ATCC 48332 / race O) (Southern corn leaf blight fungus).